The following is a 454-amino-acid chain: Carbon catabolite repressor protein 4 homolog 5 (454 aa).

Residues 1–76 (MSGYERKNTT…SLRRRRRTKE (76 aa)) are disordered. Residues 31 to 41 (VYEKSNRKESI) show a composition bias toward basic and acidic residues. The span at 61–75 (VRHSKSSLRRRRRTK) shows a compositional bias: basic residues. Glutamate 153 is a binding site for Mg(2+).

This sequence belongs to the CCR4/nocturin family. Component of the CCR4-NOT complex, at least composed of CRR4 and CAF1 proteins. Mg(2+) is required as a cofactor.

It is found in the nucleus. The protein localises to the cytoplasm. The catalysed reaction is Exonucleolytic cleavage of poly(A) to 5'-AMP.. Acts as a catalytic component of the CCR4-NOT core complex, which in the nucleus seems to be a general transcription factor, and in the cytoplasm the major mRNA deadenylase involved in mRNA turnover. The polypeptide is Carbon catabolite repressor protein 4 homolog 5 (CCR4-5) (Arabidopsis thaliana (Mouse-ear cress)).